The following is a 316-amino-acid chain: Acetyl-coenzyme A carboxylase carboxyl transferase subunit beta (316 aa).

The region spanning 29–298 (LWTKCPNCGV…LLSPLNSHHH (270 aa)) is the CoA carboxyltransferase N-terminal domain. 4 residues coordinate Zn(2+): C33, C36, C52, and C55. The C4-type zinc-finger motif lies at 33–55 (CPNCGVLAYTKDLLANQLVCLDC).

Belongs to the AccD/PCCB family. As to quaternary structure, acetyl-CoA carboxylase is a heterohexamer composed of biotin carboxyl carrier protein (AccB), biotin carboxylase (AccC) and two subunits each of ACCase subunit alpha (AccA) and ACCase subunit beta (AccD). The cofactor is Zn(2+).

The protein localises to the cytoplasm. It catalyses the reaction N(6)-carboxybiotinyl-L-lysyl-[protein] + acetyl-CoA = N(6)-biotinyl-L-lysyl-[protein] + malonyl-CoA. It functions in the pathway lipid metabolism; malonyl-CoA biosynthesis; malonyl-CoA from acetyl-CoA: step 1/1. Its function is as follows. Component of the acetyl coenzyme A carboxylase (ACC) complex. Biotin carboxylase (BC) catalyzes the carboxylation of biotin on its carrier protein (BCCP) and then the CO(2) group is transferred by the transcarboxylase to acetyl-CoA to form malonyl-CoA. This chain is Acetyl-coenzyme A carboxylase carboxyl transferase subunit beta, found in Microcystis aeruginosa (strain NIES-843 / IAM M-2473).